The following is a 217-amino-acid chain: Ribosomal RNA small subunit methyltransferase G (217 aa).

Residues Gly-85, Leu-90, Ile-135 to Glu-136, and Arg-149 contribute to the S-adenosyl-L-methionine site.

This sequence belongs to the methyltransferase superfamily. RNA methyltransferase RsmG family.

Its subcellular location is the cytoplasm. It catalyses the reaction guanosine(527) in 16S rRNA + S-adenosyl-L-methionine = N(7)-methylguanosine(527) in 16S rRNA + S-adenosyl-L-homocysteine. Specifically methylates the N7 position of guanine in position 527 of 16S rRNA. This Acidiphilium cryptum (strain JF-5) protein is Ribosomal RNA small subunit methyltransferase G.